Reading from the N-terminus, the 304-residue chain is tRNA-uridine aminocarboxypropyltransferase 1 (304 aa).

Residues Met-1–Thr-30 are disordered. Polar residues predominate over residues Asn-15–Thr-30. A DXTW motif is present at residues Asp-206–Trp-209.

Belongs to the TDD superfamily. DTWD1 family.

The protein resides in the nucleus. The catalysed reaction is a uridine in tRNA + S-adenosyl-L-methionine = a 3-[(3S)-3-amino-3-carboxypropyl]uridine in tRNA + S-methyl-5'-thioadenosine + H(+). Its function is as follows. Catalyzes the formation of 3-(3-amino-3-carboxypropyl)uridine (acp3U) at position 20 in the D-loop of several cytoplasmic tRNAs (acp3U(20)). This is tRNA-uridine aminocarboxypropyltransferase 1 from Rattus norvegicus (Rat).